Consider the following 729-residue polypeptide: Fatty acid oxidation complex subunit alpha (729 aa).

The tract at residues 1–189 is enoyl-CoA hydratase/isomerase; sequence MLYKGDTLYL…KIGLVDGVVK (189 aa). Asp-296 is a binding site for substrate. Residues 311 to 729 are 3-hydroxyacyl-CoA dehydrogenase; sequence ETPKQAAVLG…ARPVGSLKTA (419 aa). NAD(+)-binding positions include Met-324, Asp-343, 400–402, Lys-407, and Ser-429; that span reads VVE. His-450 acts as the For 3-hydroxyacyl-CoA dehydrogenase activity in catalysis. Residue Asn-453 coordinates NAD(+). The substrate site is built by Asn-500 and Tyr-660. Residues 708–729 are disordered; it reads RHNEPYYPPVEPARPVGSLKTA.

The protein in the N-terminal section; belongs to the enoyl-CoA hydratase/isomerase family. It in the C-terminal section; belongs to the 3-hydroxyacyl-CoA dehydrogenase family. As to quaternary structure, heterotetramer of two alpha chains (FadB) and two beta chains (FadA).

It catalyses the reaction a (3S)-3-hydroxyacyl-CoA + NAD(+) = a 3-oxoacyl-CoA + NADH + H(+). The catalysed reaction is a (3S)-3-hydroxyacyl-CoA = a (2E)-enoyl-CoA + H2O. The enzyme catalyses a 4-saturated-(3S)-3-hydroxyacyl-CoA = a (3E)-enoyl-CoA + H2O. It carries out the reaction (3S)-3-hydroxybutanoyl-CoA = (3R)-3-hydroxybutanoyl-CoA. It catalyses the reaction a (3Z)-enoyl-CoA = a 4-saturated (2E)-enoyl-CoA. The catalysed reaction is a (3E)-enoyl-CoA = a 4-saturated (2E)-enoyl-CoA. It participates in lipid metabolism; fatty acid beta-oxidation. In terms of biological role, involved in the aerobic and anaerobic degradation of long-chain fatty acids via beta-oxidation cycle. Catalyzes the formation of 3-oxoacyl-CoA from enoyl-CoA via L-3-hydroxyacyl-CoA. It can also use D-3-hydroxyacyl-CoA and cis-3-enoyl-CoA as substrate. This Salmonella schwarzengrund (strain CVM19633) protein is Fatty acid oxidation complex subunit alpha.